The following is a 259-amino-acid chain: Global transcriptional regulator CodY (259 aa).

Residues 1-155 are GAF domain; it reads MTLLEKTRKI…GGTVVGMEIL (155 aa). Positions 203-222 form a DNA-binding region, H-T-H motif; it reads ASKIADRVGITRSVIVNALR.

The protein belongs to the CodY family.

It localises to the cytoplasm. Its function is as follows. DNA-binding global transcriptional regulator which is involved in the adaptive response to starvation and acts by directly or indirectly controlling the expression of numerous genes in response to nutrient availability. During rapid exponential growth, CodY is highly active and represses genes whose products allow adaptation to nutrient depletion. The chain is Global transcriptional regulator CodY from Listeria monocytogenes serotype 4b (strain CLIP80459).